Consider the following 314-residue polypeptide: Short-chain dehydrogenase/reductase sthC (314 aa).

Positions 1–10 are enriched in polar residues; the sequence is MAPAETTGNV. The tract at residues 1–27 is disordered; sequence MAPAETTGNVQRPEAGKQSMGSFWTQM. NADP(+)-binding residues include valine 56, lysine 80, aspartate 105, asparagine 132, and arginine 167. Serine 191 (proton donor) is an active-site residue. Residues tyrosine 222 and lysine 226 each coordinate NADP(+). The active-site Proton acceptor is the tyrosine 222. The active-site Lowers pKa of active site Tyr is the lysine 226.

Belongs to the short-chain dehydrogenases/reductases (SDR) family.

The catalysed reaction is dehydroprobetaenone I + AH2 = probetaenone I + A. The enzyme catalyses betaenone C + AH2 = betaenone B + A. Its pathway is mycotoxin biosynthesis. Functionally, short-chain dehydrogenase/reductase; part of the gene cluster that mediates the biosynthesis of the phytotoxin stemphyloxin II. The first step of the pathway is the synthesis of dehydroprobetaenone I by the polyketide synthase sthA and the enoyl reductase sthE via condensation of one acetyl-CoA starter unit with 7 malonyl-CoA units and 5 methylations. The C-terminal reductase (R) domain of sthA catalyzes the reductive release of the polyketide chain. Because sthA lacks a designated enoylreductase (ER) domain, the required activity is provided the enoyl reductase sthE. The short-chain dehydrogenase/reductase sthC then catalyzes reduction of dehydroprobetaenone I to probetaenone I. The cytochrome P450 monooxygenase sthF catalyzes successive epoxidation, oxidation (resulting from epoxide opening) and hydroxylation to install a tertiary alcohol in the decaline ring to yield betaenone C from dehydroprobetaenone I and betaenone B from probetaenone I. The FAD-linked oxidoreductase sthB is responsible for the conversion of betaenone C to betaenone A via an intramolecular aldol reaction between C-1 and C-17 to form the bridged tricyclic system in betaenone A. Finally, the cytochrome P450 monooxygenase sthD catalyzes the hydroxylation of C-15 to afford the final metabolite stemphyloxin II. The polypeptide is Short-chain dehydrogenase/reductase sthC (Phaeosphaeria nodorum (strain SN15 / ATCC MYA-4574 / FGSC 10173) (Glume blotch fungus)).